The chain runs to 318 residues: Formimidoylglutamase (318 aa).

6 residues coordinate Mn(2+): histidine 130, aspartate 155, histidine 157, aspartate 159, aspartate 246, and aspartate 248.

It belongs to the arginase family. It depends on Mn(2+) as a cofactor.

It carries out the reaction N-formimidoyl-L-glutamate + H2O = formamide + L-glutamate. It functions in the pathway amino-acid degradation; L-histidine degradation into L-glutamate; L-glutamate from N-formimidoyl-L-glutamate (hydrolase route): step 1/1. Its function is as follows. Catalyzes the conversion of N-formimidoyl-L-glutamate to L-glutamate and formamide. In Photorhabdus laumondii subsp. laumondii (strain DSM 15139 / CIP 105565 / TT01) (Photorhabdus luminescens subsp. laumondii), this protein is Formimidoylglutamase.